Reading from the N-terminus, the 134-residue chain is Shikimate kinase (134 aa).

The protein belongs to the shikimate kinase family.

It localises to the cytoplasm. It carries out the reaction shikimate + ATP = 3-phosphoshikimate + ADP + H(+). It participates in metabolic intermediate biosynthesis; chorismate biosynthesis; chorismate from D-erythrose 4-phosphate and phosphoenolpyruvate: step 5/7. The chain is Shikimate kinase (aroK) from Neisseria gonorrhoeae.